Consider the following 375-residue polypeptide: Lipid-A-disaccharide synthase (375 aa).

This sequence belongs to the LpxB family.

The enzyme catalyses a lipid X + a UDP-2-N,3-O-bis[(3R)-3-hydroxyacyl]-alpha-D-glucosamine = a lipid A disaccharide + UDP + H(+). The protein operates within bacterial outer membrane biogenesis; LPS lipid A biosynthesis. Its function is as follows. Condensation of UDP-2,3-diacylglucosamine and 2,3-diacylglucosamine-1-phosphate to form lipid A disaccharide, a precursor of lipid A, a phosphorylated glycolipid that anchors the lipopolysaccharide to the outer membrane of the cell. This chain is Lipid-A-disaccharide synthase, found in Pseudomonas putida (strain ATCC 700007 / DSM 6899 / JCM 31910 / BCRC 17059 / LMG 24140 / F1).